The following is a 252-amino-acid chain: Cytochrome b6-f complex iron-sulfur subunit, chloroplastic (252 aa).

Residues 94 to 114 (LVLAAVAPVVASAGGCYLYYF) traverse the membrane as a helical segment. Residues 141 to 235 (WFKSHKKNAR…VEDDNGKILL (95 aa)) form the Rieske domain. Cysteine 181, histidine 183, cysteine 199, and histidine 202 together coordinate [2Fe-2S] cluster. The cysteines at positions 186 and 201 are disulfide-linked.

Belongs to the Rieske iron-sulfur protein family. As to quaternary structure, the 4 large subunits of the cytochrome b6-f complex are cytochrome b6, subunit IV (17 kDa polypeptide, petD), cytochrome f and the Rieske protein, while the 4 small subunits are petG, petL, petM and petN. The complex functions as a dimer. The cofactor is [2Fe-2S] cluster.

The protein localises to the plastid. It localises to the chloroplast thylakoid membrane. The enzyme catalyses 2 oxidized [plastocyanin] + a plastoquinol + 2 H(+)(in) = 2 reduced [plastocyanin] + a plastoquinone + 4 H(+)(out). Functionally, component of the cytochrome b6-f complex, which mediates electron transfer between photosystem II (PSII) and photosystem I (PSI), cyclic electron flow around PSI, and state transitions. The polypeptide is Cytochrome b6-f complex iron-sulfur subunit, chloroplastic (petC) (Bigelowiella natans (Pedinomonas minutissima)).